We begin with the raw amino-acid sequence, 365 residues long: HLA class I histocompatibility antigen, A alpha chain (365 aa).

Residues 1-24 form the signal peptide; it reads MAVMAPRTLLLLLSGALALTQTWA. Residues 3–11 are VL9 epitope; sequence VMAPRTLLL. An alpha-1 region spans residues 25-114; sequence GSHSMRYFFT…LRGYYNQSEA (90 aa). Residues 25-308 are Extracellular-facing; the sequence is GSHSMRYFFT…ELSSQPTIPI (284 aa). Y31 lines the a peptide antigen pocket. Position 83 is a sulfotyrosine (Y83). A peptide antigen is bound by residues T97 and Y108. An N-linked (GlcNAc...) asparagine glycan is attached at N110. The tract at residues 115-206 is alpha-2; it reads GSHTIQIMYG…ENGKETLQRT (92 aa). C125 and C188 form a disulfide bridge. D140, T167, K170, Y183, and Y195 together coordinate a peptide antigen. An alpha-3 region spans residues 207–298; it reads DPPKTHMTHH…GLPKPLTLRW (92 aa). One can recognise an Ig-like C1-type domain in the interval 209–295; that stretch reads PKTHMTHHPI…QHEGLPKPLT (87 aa). Cysteines 227 and 283 form a disulfide. Residues 299-308 form a connecting peptide region; sequence ELSSQPTIPI. The chain crosses the membrane as a helical span at residues 309–332; the sequence is VGIIAGLVLLGAVITGAVVAAVMW. At 333–365 the chain is on the cytoplasmic side; that stretch reads RRKSSDRKGGSYTQAASSDSAQGSDVSLTACKV. Residues 339–365 form a disordered region; that stretch reads RKGGSYTQAASSDSAQGSDVSLTACKV. S343 carries the post-translational modification Phosphoserine. Position 344 is a phosphotyrosine (Y344). Residues 346–359 show a composition bias toward low complexity; it reads QAASSDSAQGSDVS. 5 positions are modified to phosphoserine: S349, S350, S352, S356, and S359.

This sequence belongs to the MHC class I family. Heterotrimer that consists of an alpha chain HLA-A, a beta chain B2M and a peptide (peptide-HLA-A-B2M). Early in biogenesis, HLA-A-B2M dimer interacts with the components of the peptide-loading complex composed of TAPBP, TAP1-TAP2, TAPBPL, PDIA3/ERP57 and CALR. Interacts with TAP1-TAP2 transporter via TAPBP; this interaction is obligatory for the loading of peptide epitopes delivered to the ER by TAP1-TAP2 transporter. Interacts with TAPBPL; TAPBPL binds peptide-free HLA-A-B2M complexes or those loaded with low affinity peptides, likely facilitating peptide exchange for higher affinity peptides. Only optimally assembled peptide-HLA-B2M trimer translocates to the surface of antigen-presenting cells, where it interacts with TCR and CD8 coreceptor on the surface of T cells. HLA-A (via polymorphic alpha-1 and alpha-2 domains) interacts with antigen-specific TCR (via CDR3 domains). One HLA-A molecule (mainly via nonpolymorphic alpha-3 domain) interacts with one CD8A homodimer (via CDR-like loop); this interaction ensures peptide-HLA-A-B2M recognition by CD8-positive T cells only. Alleles A*23:01; A*24:02 and A*32:01 interact (via Bw4 motif) with KIR3DL1 on NK cells; this interaction is direct. As to quaternary structure, (Microbial infection) Interacts with HHV-8 MIR1 protein. In terms of assembly, (Microbial infection) Interacts with HTLV-1 accessory protein p12I. In terms of processing, (Microbial infection) Polyubiquitinated in a post ER compartment by interaction with human herpesvirus 8 MIR1 protein. This targets the protein for rapid degradation via the ubiquitin system. N-linked glycosylation at Asn-110. As to expression, ubiquitous.

The protein resides in the cell membrane. The protein localises to the endoplasmic reticulum membrane. Its function is as follows. Antigen-presenting major histocompatibility complex class I (MHCI) molecule. In complex with B2M/beta 2 microglobulin displays primarily viral and tumor-derived peptides on antigen-presenting cells for recognition by alpha-beta T cell receptor (TCR) on HLA-A-restricted CD8-positive T cells, guiding antigen-specific T cell immune response to eliminate infected or transformed cells. May also present self-peptides derived from the signal sequence of secreted or membrane proteins, although T cells specific for these peptides are usually inactivated to prevent autoreactivity. Both the peptide and the MHC molecule are recognized by TCR, the peptide is responsible for the fine specificity of antigen recognition and MHC residues account for the MHC restriction of T cells. Typically presents intracellular peptide antigens of 8 to 13 amino acids that arise from cytosolic proteolysis via IFNG-induced immunoproteasome or via endopeptidase IDE/insulin-degrading enzyme. Can bind different peptides containing allele-specific binding motifs, which are mainly defined by anchor residues at position 2 and 9. In terms of biological role, allele A*01:01: Presents a restricted peptide repertoire including viral epitopes derived from IAV NP/nucleoprotein (CTELKLSDY), IAV PB1/polymerase basic protein 1 (VSDGGPNLY), HAdV-11 capsid L3/hexon protein (LTDLGQNLLY), SARS-CoV-2 3a/ORF3a (FTSDYYQLY) as well as tumor peptide antigens including MAGE1 (EADPTGHSY), MAGEA3 (EVDPIGHLY) and WT1 (TSEKRPFMCAY), all having in common a canonical motif with a negatively charged Asp or Glu residue at position 3 and a Tyr anchor residue at the C-terminus. A number of HLA-A*01:01-restricted peptides carry a post-translational modification with oxidation and N-terminal acetylation being the most frequent. Fails to present highly immunogenic peptides from the EBV latent antigens. Allele A*02:01: A major allele in human populations, presents immunodominant viral epitopes derived from IAV M/matrix protein 1 (GILGFVFTL), HIV-1 env (TLTSCNTSV), HIV-1 gag-pol (ILKEPVHGV), HTLV-1 Tax (LLFGYPVYV), HBV C/core antigen (FLPSDFFPS), HCMV UL83/pp65 (NLVPMVATV) as well as tumor peptide antigens including MAGEA4 (GVYDGREHTV), WT1 (RMFPNAPYL) and CTAG1A/NY-ESO-1 (SLLMWITQC), all having in common hydrophobic amino acids at position 2 and at the C-terminal anchors. Functionally, allele A*03:01: Presents viral epitopes derived from IAV NP (ILRGSVAHK), HIV-1 nef (QVPLRPMTYK), HIV-1 gag-pol (AIFQSSMTK), SARS-CoV-2 N/nucleoprotein (KTFPPTEPK) as well as tumor peptide antigens including PMEL (LIYRRRLMK), NODAL (HAYIQSLLK), TRP-2 (RMYNMVPFF), all having in common hydrophobic amino acids at position 2 and Lys or Arg anchor residues at the C-terminus. May also display spliced peptides resulting from the ligation of two separate proteasomal cleavage products that are not contiguous in the parental protein. Its function is as follows. Allele A*11:01: Presents several immunodominant epitopes derived from HIV-1 gag-pol and HHV-4 EBNA4, containing the peptide motif with Val, Ile, Thr, Leu, Tyr or Phe at position 2 and Lys anchor residue at the C-terminus. Important in the control of HIV-1, EBV and HBV infections. Presents an immunodominant epitope derived from SARS-CoV-2 N/nucleoprotein (KTFPPTEPK). In terms of biological role, allele A*23:01: Interacts with natural killer (NK) cell receptor KIR3DL1 and may contribute to functional maturation of NK cells and self-nonself discrimination during innate immune response. Allele A*24:02: Presents viral epitopes derived from HIV-1 nef (RYPLTFGWCF), EBV lytic- and latent-cycle antigens BRLF1 (TYPVLEEMF), BMLF1 (DYNFVKQLF) and LMP2 (IYVLVMLVL), SARS-CoV nucleocapsid/N (QFKDNVILL), as well as tumor peptide antigens including PRAME (LYVDSLFFL), all sharing a common signature motif, namely an aromatic residue Tyr or Phe at position 2 and a nonhydrophobic anchor residue Phe, Leu or Iso at the C-terminus. Interacts with natural killer (NK) cell receptor KIR3DL1 and may contribute to functional maturation of NK cells and self-nonself discrimination during innate immune response. Functionally, allele A*26:01: Presents several epitopes derived from HIV-1 gag-pol (EVIPMFSAL, ETKLGKAGY) and env (LVSDGGPNLY), carrying as anchor residues preferentially Glu at position 1, Val or Thr at position 2 and Tyr at the C-terminus. Its function is as follows. Allele A*29:02: Presents peptides having a common motif, namely a Glu residue at position 2 and Tyr or Leu anchor residues at the C-terminus. In terms of biological role, allele A*32:01: Interacts with natural killer (NK) cell receptor KIR3DL1 and may contribute to functional maturation of NK cells and self-nonself discrimination during innate immune response. Allele A*68:01: Presents viral epitopes derived from IAV NP (KTGGPIYKR) and HIV-1 tat (ITKGLGISYGR), having a common signature motif namely, Val or Thr at position 2 and positively charged residues Arg or Lys at the C-terminal anchor. Functionally, allele A*74:01: Presents immunodominant HIV-1 epitopes derived from gag-pol (GQMVHQAISPR, QIYPGIKVR) and rev (RQIHSISER), carrying an aliphatic residue at position 2 and Arg anchor residue at the C-terminus. May contribute to viral load control in chronic HIV-1 infection. The polypeptide is HLA class I histocompatibility antigen, A alpha chain (Homo sapiens (Human)).